The primary structure comprises 519 residues: Cytochrome P450 52A10 (519 aa).

Cys466 is a binding site for heme.

It belongs to the cytochrome P450 family. The cofactor is heme.

It localises to the membrane. Together with an NADPH cytochrome P450 the enzyme system catalyzes the terminal hydroxylation as the first step in the assimilation of alkanes and fatty acids. This is Cytochrome P450 52A10 (CYP52A10) from Candida maltosa (Yeast).